The sequence spans 431 residues: Tyrosine--tRNA ligase (431 aa).

Y34 contacts L-tyrosine. A 'HIGH' region motif is present at residues 39–48 (PTADSLHIGH). Residues Y171 and Q175 each coordinate L-tyrosine. Residues 231 to 235 (KFGKT) carry the 'KMSKS' region motif. K234 is a binding site for ATP. The S4 RNA-binding domain occupies 353–422 (INVVEALVKT…GKYTILRRGK (70 aa)).

This sequence belongs to the class-I aminoacyl-tRNA synthetase family. TyrS type 1 subfamily. Homodimer.

The protein resides in the cytoplasm. The enzyme catalyses tRNA(Tyr) + L-tyrosine + ATP = L-tyrosyl-tRNA(Tyr) + AMP + diphosphate + H(+). Functionally, catalyzes the attachment of tyrosine to tRNA(Tyr) in a two-step reaction: tyrosine is first activated by ATP to form Tyr-AMP and then transferred to the acceptor end of tRNA(Tyr). The sequence is that of Tyrosine--tRNA ligase from Neisseria meningitidis serogroup A / serotype 4A (strain DSM 15465 / Z2491).